Consider the following 968-residue polypeptide: RNA polymerase-associated protein RapA (968 aa).

Residues 164–334 (DVGRRHAPRV…FARLRLLDPN (171 aa)) form the Helicase ATP-binding domain. 177–184 (DEVGLGKT) contacts ATP. Residues 280 to 283 (DEAH) carry the DEAH box motif. Positions 490–662 (RVEWLMGYLT…YLASPDETEG (173 aa)) constitute a Helicase C-terminal domain.

The protein belongs to the SNF2/RAD54 helicase family. RapA subfamily. As to quaternary structure, interacts with the RNAP. Has a higher affinity for the core RNAP than for the holoenzyme. Its ATPase activity is stimulated by binding to RNAP.

Its function is as follows. Transcription regulator that activates transcription by stimulating RNA polymerase (RNAP) recycling in case of stress conditions such as supercoiled DNA or high salt concentrations. Probably acts by releasing the RNAP, when it is trapped or immobilized on tightly supercoiled DNA. Does not activate transcription on linear DNA. Probably not involved in DNA repair. The sequence is that of RNA polymerase-associated protein RapA from Escherichia coli O127:H6 (strain E2348/69 / EPEC).